We begin with the raw amino-acid sequence, 176 residues long: Ribosome rescue factor SmrB (176 aa).

A disordered region spans residues 29-51; that stretch reads TIIQQPKKNTKQKEIKRSNREAS. Basic and acidic residues predominate over residues 39-51; that stretch reads KQKEIKRSNREAS. Positions 97 to 172 constitute a Smr domain; it reads LDMHGMTQQE…GDGALLVLLS (76 aa).

Belongs to the SmrB family. As to quaternary structure, associates with collided ribosomes, but not with correctly translating polysomes.

Acts as a ribosome collision sensor. Detects stalled/collided disomes (pairs of ribosomes where the leading ribosome is stalled and a second ribosome has collided with it) and endonucleolytically cleaves mRNA at the 5' boundary of the stalled ribosome. Stalled/collided disomes form a new interface (primarily via the 30S subunits) that binds SmrB. Cleaved mRNA becomes available for tmRNA ligation, leading to ribosomal subunit dissociation and rescue of stalled ribosomes. This Vibrio parahaemolyticus serotype O3:K6 (strain RIMD 2210633) protein is Ribosome rescue factor SmrB.